The primary structure comprises 31 residues: Cyclotide vibi-F (31 aa).

A cross-link (cyclopeptide (Gly-Asn)) is located at residues 1–31 (GTIPCGESCVFIPCLTSALGCSCKSKVCYKN). 3 disulfide bridges follow: Cys-5–Cys-21, Cys-9–Cys-23, and Cys-14–Cys-28.

In terms of processing, this is a cyclic peptide.

In terms of biological role, probably participates in a plant defense mechanism. This chain is Cyclotide vibi-F, found in Viola biflora (Yellow wood violet).